We begin with the raw amino-acid sequence, 204 residues long: Large ribosomal subunit protein eL15 (204 aa).

It belongs to the eukaryotic ribosomal protein eL15 family. As to quaternary structure, component of the large ribosomal subunit.

Its subcellular location is the cytoplasm. Its function is as follows. Component of the large ribosomal subunit. The ribosome is a large ribonucleoprotein complex responsible for the synthesis of proteins in the cell. The protein is Large ribosomal subunit protein eL15 (rpl15) of Megalobrama amblycephala (Chinese blunt snout bream).